The primary structure comprises 439 residues: MKKPPLYKSLYAQVIVAIIIGVLLGHFLPETGTAMKPLGDGFIKLIKMIIAPVIFCTVVIGIAGMEDMKKVGKTGGLALLYFEVMSTVALLVGLIIVNVLQPGAGMNVDVSTLDTASLASYTAPGKLETVTEFAMHIIPMSMIDAFAKGDVLQVLLVSVLFGFALQKLGGRGTLVFDFIEKISHVLFTIVGFIMRAAPVGAFGAMAFTIGKYGISSLLSLGKLMGAFYLTCLFFIFVVLGIVTRLHGFSIWKFVKYIKEELLIVLGTSSSESVLPRMIAKMENMGAKKSVVGLVIPTGYSFNLDGTAIYLTMAAVFIAQATNTPMSLMQQVTLLAVLLLTSKGAAGITGSGFIVLAATLSAVGHVPVAGLALILGIDRFMSEARALTNTIGNGVATLVVAKWVGDLDMDKLHAELDNESPQAADQPEKILDQTNTKLGA.

A run of 9 helical transmembrane segments spans residues 9–29 (SLYA…HFLP), 45–65 (LIKM…IAGM), 77–97 (LALL…LIIV), 145–165 (AFAK…GFAL), 185–205 (VLFT…FGAM), 223–243 (LMGA…GIVT), 290–310 (VVGL…AIYL), 332–352 (TLLA…GSGF), and 353–373 (IVLA…LALI). Positions 417-439 (NESPQAADQPEKILDQTNTKLGA) are disordered.

It belongs to the dicarboxylate/amino acid:cation symporter (DAACS) (TC 2.A.23) family.

Its subcellular location is the cell inner membrane. Functionally, responsible for the transport of dicarboxylates such as succinate, fumarate, and malate from the periplasm across the membrane. The sequence is that of C4-dicarboxylate transport protein from Janthinobacterium sp. (strain Marseille) (Minibacterium massiliensis).